The chain runs to 224 residues: Cutinase 1 (224 aa).

The N-terminal stretch at 1–16 is a signal peptide; sequence MKFLSVLSLAITLAAA. Cysteines 46 and 125 form a disulfide. Serine 136 acts as the Nucleophile in catalysis. A disulfide bridge links cysteine 187 with cysteine 194. Aspartate 191 is an active-site residue. The Proton donor/acceptor role is filled by histidine 204.

The protein belongs to the cutinase family. In terms of processing, the 2 disulfide bonds play a critical role in holding the catalytic residues in juxta-position; reduction of the disulfide bridges results in the complete inactivation of the enzyme. Post-translationally, the N-terminus is blocked.

Its subcellular location is the secreted. It catalyses the reaction cutin + H2O = cutin monomers.. Its activity is regulated as follows. Inhibited by diisopropyl fluorophosphate (DFP). Catalyzes the hydrolysis of complex carboxylic polyesters found in the cell wall of plants. Degrades cutin, a macromolecule that forms the structure of the plant cuticle. Allows pathogenic fungi to penetrate through the cuticular barrier into the host plant during the initial stage of fungal infection. The sequence is that of Cutinase 1 (CUTA) from Colletotrichum gloeosporioides (Anthracnose fungus).